Reading from the N-terminus, the 146-residue chain is UPF0306 protein CKO_04548 (146 aa).

It belongs to the UPF0306 family.

The chain is UPF0306 protein CKO_04548 from Citrobacter koseri (strain ATCC BAA-895 / CDC 4225-83 / SGSC4696).